The following is a 201-amino-acid chain: MRVRRDKNLEKILDVDPLVISKFPFKLKQDTIIELGSGKGTMISALALKNPSQNYLCVERDRTIASKAIEKFNDLNLKNINLIVSDIQHLTEIIENKVNTIWLTFSDPWPKNRHEHRRLTYKTFLDLYKKFLSPQGVIKLKTDNDKFFHYSLESMSEFGMKILYQTNDLHNSIKNLDNEMTDYEKKWSSLGKSINYLEASF.

Residues glutamate 34, glutamate 59, aspartate 86, and aspartate 107 each contribute to the S-adenosyl-L-methionine site. Residue aspartate 107 is part of the active site. Substrate is bound by residues lysine 111, aspartate 143, and 181–184 (TDYE).

Belongs to the class I-like SAM-binding methyltransferase superfamily. TrmB family.

It carries out the reaction guanosine(46) in tRNA + S-adenosyl-L-methionine = N(7)-methylguanosine(46) in tRNA + S-adenosyl-L-homocysteine. Its pathway is tRNA modification; N(7)-methylguanine-tRNA biosynthesis. Functionally, catalyzes the formation of N(7)-methylguanine at position 46 (m7G46) in tRNA. This Mycoplasma mobile (strain ATCC 43663 / 163K / NCTC 11711) (Mesomycoplasma mobile) protein is tRNA (guanine-N(7)-)-methyltransferase.